Here is a 296-residue protein sequence, read N- to C-terminus: Putative peptide transport system permease protein BruAb2_1032 (296 aa).

A run of 6 helical transmembrane segments spans residues I35–N55, L97–A117, V131–L151, I205–I225, A229–V249, and W260–I280. The 185-residue stretch at L97–G281 folds into the ABC transmembrane type-1 domain.

The protein belongs to the binding-protein-dependent transport system permease family. The complex is composed of two ATP-binding proteins (BruAb2_1033 and BruAb2_1034), two transmembrane proteins (BruAb2_1031 and BruAb2_1032) and a solute-binding protein (BruAb2_1030).

The protein resides in the cell inner membrane. Its function is as follows. Probably part of an ABC transporter complex that could be involved in peptide import. Probably responsible for the translocation of the substrate across the membrane. The protein is Putative peptide transport system permease protein BruAb2_1032 of Brucella abortus biovar 1 (strain 9-941).